We begin with the raw amino-acid sequence, 166 residues long: uncharacterized protein (166 aa).

117-124 (AAKSGGKT) serves as a coordination point for ATP.

This is an uncharacterized protein from Mycoplasma pneumoniae (strain ATCC 29342 / M129 / Subtype 1) (Mycoplasmoides pneumoniae).